A 444-amino-acid chain; its full sequence is Tubulin beta-7 chain (444 aa).

Residues Gln11, Glu69, Ser138, Gly142, Thr143, Gly144, Asn204, and Asn226 each coordinate GTP. Glu69 contacts Mg(2+).

It belongs to the tubulin family. As to quaternary structure, dimer of alpha and beta chains. A typical microtubule is a hollow water-filled tube with an outer diameter of 25 nm and an inner diameter of 15 nM. Alpha-beta heterodimers associate head-to-tail to form protofilaments running lengthwise along the microtubule wall with the beta-tubulin subunit facing the microtubule plus end conferring a structural polarity. Microtubules usually have 13 protofilaments but different protofilament numbers can be found in some organisms and specialized cells. It depends on Mg(2+) as a cofactor.

It localises to the cytoplasm. Its subcellular location is the cytoskeleton. Its function is as follows. Tubulin is the major constituent of microtubules, a cylinder consisting of laterally associated linear protofilaments composed of alpha- and beta-tubulin heterodimers. Microtubules grow by the addition of GTP-tubulin dimers to the microtubule end, where a stabilizing cap forms. Below the cap, tubulin dimers are in GDP-bound state, owing to GTPase activity of alpha-tubulin. The protein is Tubulin beta-7 chain of Gossypium hirsutum (Upland cotton).